The chain runs to 184 residues: ATP synthase subunit b, chloroplastic (184 aa).

Residues 27–49 (LATNPINLSVVFGVLIFFGKGVL) traverse the membrane as a helical segment.

This sequence belongs to the ATPase B chain family. As to quaternary structure, F-type ATPases have 2 components, F(1) - the catalytic core - and F(0) - the membrane proton channel. F(1) has five subunits: alpha(3), beta(3), gamma(1), delta(1), epsilon(1). F(0) has four main subunits: a(1), b(1), b'(1) and c(10-14). The alpha and beta chains form an alternating ring which encloses part of the gamma chain. F(1) is attached to F(0) by a central stalk formed by the gamma and epsilon chains, while a peripheral stalk is formed by the delta, b and b' chains.

Its subcellular location is the plastid. It localises to the chloroplast thylakoid membrane. Functionally, f(1)F(0) ATP synthase produces ATP from ADP in the presence of a proton or sodium gradient. F-type ATPases consist of two structural domains, F(1) containing the extramembraneous catalytic core and F(0) containing the membrane proton channel, linked together by a central stalk and a peripheral stalk. During catalysis, ATP synthesis in the catalytic domain of F(1) is coupled via a rotary mechanism of the central stalk subunits to proton translocation. Its function is as follows. Component of the F(0) channel, it forms part of the peripheral stalk, linking F(1) to F(0). This Lobularia maritima (Sweet alyssum) protein is ATP synthase subunit b, chloroplastic.